The sequence spans 121 residues: Large ribosomal subunit protein bL12 (121 aa).

The protein belongs to the bacterial ribosomal protein bL12 family. In terms of assembly, homodimer. Part of the ribosomal stalk of the 50S ribosomal subunit. Forms a multimeric L10(L12)X complex, where L10 forms an elongated spine to which 2 to 4 L12 dimers bind in a sequential fashion. Binds GTP-bound translation factors.

In terms of biological role, forms part of the ribosomal stalk which helps the ribosome interact with GTP-bound translation factors. Is thus essential for accurate translation. The protein is Large ribosomal subunit protein bL12 of Xanthomonas euvesicatoria pv. vesicatoria (strain 85-10) (Xanthomonas campestris pv. vesicatoria).